A 643-amino-acid polypeptide reads, in one-letter code: Galactan 5-O-arabinofuranosyltransferase (643 aa).

The next 13 membrane-spanning stretches (helical) occupy residues 25 to 45, 66 to 86, 97 to 117, 180 to 200, 205 to 225, 229 to 249, 255 to 272, 276 to 293, 309 to 329, 355 to 375, 384 to 404, 420 to 440, and 445 to 465; these read VLVA…VAVV, ALTT…GWLW, LGGL…PLGA, FKPW…VLWW, FEYA…YSSP, AAMI…GLGA, WAAV…ATWY, VAYG…LAGS, LAVV…PYLL, FPML…LWLV, AGAL…SMLA, LSVL…QALG, and GVIP…SQDI. Residues 466–643 lie on the Extracellular side of the membrane; sequence PDVLRPDLTI…LAIRKPQESA (178 aa).

This sequence belongs to the glycosyltransferase 85 family.

It localises to the cell membrane. The enzyme catalyses Adds an alpha-D-arabinofuranosyl group from trans,octacis-decaprenylphospho-beta-D-arabinofuranose at the 5-O-position of the eighth, tenth and twelfth galactofuranose unit of the galactofuranan chain of [beta-D-galactofuranosyl-(1-&gt;5)-beta-D-galactofuranosyl-(1-&gt;6)]14-beta-D-galactofuranosyl-(1-&gt;5)-beta-D-galactofuranosyl-(1-&gt;4)-alpha-L-rhamnopyranosyl-(1-&gt;3)-N-acetyl-alpha-D-glucosaminyl-diphospho-trans,octacis-decaprenol.. The protein operates within cell wall biogenesis; cell wall polysaccharide biosynthesis. Its function is as follows. Involved in the biosynthesis of the arabinogalactan (AG) region of the mycolylarabinogalactan-peptidoglycan (mAGP) complex, an essential component of the mycobacterial cell wall. Catalyzes the addition of the first key arabinofuranosyl (Araf) residue from the sugar donor decaprenyl-phospho-arabinose (DPA) on the C-5 of a 6-linked galactofuranosyl (Galf) of the galactan domain, thus 'priming' the galactan for further elaboration by other arabinofuranosyltransferases. It is not able to add an Araf residue to a terminal Galf. This Mycobacterium tuberculosis (strain CDC 1551 / Oshkosh) protein is Galactan 5-O-arabinofuranosyltransferase.